Reading from the N-terminus, the 330-residue chain is Ketol-acid reductoisomerase (NADP(+)) (330 aa).

A KARI N-terminal Rossmann domain is found at 3–184 (LPVYYDKDID…GGGRMGVLET (182 aa)). NADP(+)-binding positions include 26–29 (YGAQ), S52, and S54. H109 is an active-site residue. G135 is a binding site for NADP(+). Residues 185-329 (SFKEECESDL…EILRAPFNHK (145 aa)) form the KARI C-terminal knotted domain. Mg(2+) contacts are provided by D193, E197, E229, and E233. S254 serves as a coordination point for substrate.

Belongs to the ketol-acid reductoisomerase family. Mg(2+) is required as a cofactor.

It catalyses the reaction (2R)-2,3-dihydroxy-3-methylbutanoate + NADP(+) = (2S)-2-acetolactate + NADPH + H(+). The catalysed reaction is (2R,3R)-2,3-dihydroxy-3-methylpentanoate + NADP(+) = (S)-2-ethyl-2-hydroxy-3-oxobutanoate + NADPH + H(+). Its pathway is amino-acid biosynthesis; L-isoleucine biosynthesis; L-isoleucine from 2-oxobutanoate: step 2/4. It participates in amino-acid biosynthesis; L-valine biosynthesis; L-valine from pyruvate: step 2/4. Involved in the biosynthesis of branched-chain amino acids (BCAA). Catalyzes an alkyl-migration followed by a ketol-acid reduction of (S)-2-acetolactate (S2AL) to yield (R)-2,3-dihydroxy-isovalerate. In the isomerase reaction, S2AL is rearranged via a Mg-dependent methyl migration to produce 3-hydroxy-3-methyl-2-ketobutyrate (HMKB). In the reductase reaction, this 2-ketoacid undergoes a metal-dependent reduction by NADPH to yield (R)-2,3-dihydroxy-isovalerate. The sequence is that of Ketol-acid reductoisomerase (NADP(+)) from Helicobacter pylori (strain ATCC 700392 / 26695) (Campylobacter pylori).